Reading from the N-terminus, the 559-residue chain is Small ribosomal subunit protein uS3m (559 aa).

The disordered stretch occupies residues 113–134 (EGTEEERNEVRGRGAGKRVESI). A compositionally biased stretch (basic and acidic residues) spans 120–134 (NEVRGRGAGKRVESI).

Belongs to the universal ribosomal protein uS3 family.

It localises to the mitochondrion. The protein is Small ribosomal subunit protein uS3m (RPS3) of Zea mays (Maize).